We begin with the raw amino-acid sequence, 496 residues long: RNA-binding motif protein, Y chromosome, family 1 member D (496 aa).

An RRM domain is found at glycine 8–lysine 85. Disordered stretches follow at residues aspartate 67 to tyrosine 349 and lysine 452 to tyrosine 496. 2 stretches are compositionally biased toward low complexity: residues proline 97 to glycine 114 and proline 149 to glycine 159. Polar residues predominate over residues asparagine 175–methionine 184. Basic and acidic residues-rich tracts occupy residues arginine 204–glycine 214, aspartate 242–serine 253, alanine 276–tyrosine 289, glycine 313–tyrosine 326, serine 335–tyrosine 349, and glycine 484–tyrosine 496.

Interacts with splicing factor proteins SFRS3/SRP20, TRA2B/SFRS10, KHDRBS1/SAM68 and KHDRBS3. Testis-specific.

It is found in the nucleus. In terms of biological role, RNA-binding protein which may be involved in spermatogenesis. Required for sperm development, possibly by participating in pre-mRNA splicing in the testis. The sequence is that of RNA-binding motif protein, Y chromosome, family 1 member D (RBMY1D) from Homo sapiens (Human).